Here is a 381-residue protein sequence, read N- to C-terminus: MSDSKEPRLQQLGLLEEEQLGGVGFRQTRGYKSLAGCLGHGPLVLQLLSFTLLAGLLVQVSKVPSSLSQGQSKQDAIYQNLTQLKVAVSELSEKSKQQEIYQELTRLKAAVGELPEKSKQQEIYQELTRLKAAVGELPEKSKLQEIYQELTRLKAAVGELPEKSKQQEIYQELSQLKAAVGDLPEKSKQQEIYQKLTQLKAAVDGLPDRSKQQEIYQELIQLKAAVERLCRPCPWEWTFFQGNCYFMSNSQRNWHNSITACQEVGAQLVVIKSAEEQNFLQLQSSRSNRFTWMGLSDLNHEGTWQWVDGSPLLPSFKQYWNKGEPNNIGEEDCAEFSGNGWNDDKCNLAKFWICKKSAASCSGDEERLLSPTPTTPNPPPE.

The Cytoplasmic portion of the chain corresponds to 1–37 (MSDSKEPRLQQLGLLEEEQLGGVGFRQTRGYKSLAGC). Short sequence motifs (endocytosis signal) lie at residues 14–15 (LL), 16–18 (EEE), and 31–34 (YKSL). Residues 38–58 (LGHGPLVLQLLSFTLLAGLLV) traverse the membrane as a helical; Signal-anchor for type II membrane protein segment. Residues 59–381 (QVSKVPSSLS…TPTTPNPPPE (323 aa)) are Extracellular-facing. A glycan (N-linked (GlcNAc...) asparagine) is linked at asparagine 80. 6 tandem repeats follow at residues 96 to 118 (KQQE…PEKS), 119 to 141 (KQQE…PEKS), 142 to 164 (KLQE…PEKS), 165 to 187 (KQQE…PEKS), 188 to 210 (KQQE…PDRS), and 211 to 234 (KQQE…RPCP). The 6 X approximate tandem repeats stretch occupies residues 96–303 (KQQEIYQELT…GLSDLNHEGT (208 aa)). Cystine bridges form between cysteine 233/cysteine 244, cysteine 261/cysteine 354, and cysteine 333/cysteine 346. In terms of domain architecture, C-type lectin spans 240-355 (FQGNCYFMSN…CNLAKFWICK (116 aa)). 6 residues coordinate Ca(2+): glutamate 324, asparagine 326, isoleucine 328, glutamate 331, asparagine 342, and aspartate 343. The tract at residues 359–381 (ASCSGDEERLLSPTPTTPNPPPE) is disordered.

Homotetramer. Interacts with C1QBP; the interaction is indicative for a C1q:C1QBP:CD209 signaling complex. Interacts with ICAM2 and ICAM3 by binding to mannose-like carbohydrates. Interacts (via C-type lectin domain) with CEACAM1 (via Lewis X moieties); this interaction is regulated by the glycosylation pattern of CEACAM1 on cell types and regulates contact between dendritic cells and neutrophils. In terms of tissue distribution, expressed in lymph nodes.

The protein localises to the membrane. Its function is as follows. Pathogen-recognition receptor expressed on the surface of immature dendritic cells (DCs) and involved in initiation of primary immune response. Thought to mediate the endocytosis of pathogens which are subsequently degraded in lysosomal compartments. The receptor returns to the cell membrane surface and the pathogen-derived antigens are presented to resting T-cells via MHC class II proteins to initiate the adaptive immune response. Probably recognizes in a calcium-dependent manner high mannose N-linked oligosaccharides in a variety of pathogen antigens. On DCs it is a high affinity receptor for ICAM2 and ICAM3 by binding to mannose-like carbohydrates. May act as a DC rolling receptor that mediates transendothelial migration of DC presursors from blood to tissues by binding endothelial ICAM2. Seems to regulate DC-induced T-cell proliferation by binding to ICAM3 on T-cells in the immunological synapse formed between DC and T-cells. The polypeptide is CD209 antigen (CD209) (Chlorocebus aethiops (Green monkey)).